Consider the following 340-residue polypeptide: Extracellular matrix protein-binding protein emp (340 aa).

An N-terminal signal peptide occupies residues 1–26 (MKKKLLVLTMSTLFATQLINSNHAKA).

The protein resides in the cell surface. Functionally, adhesin that binds to the host cell extracellular matrix proteins fibronectin, fibrinogen, collagen, and vitronectin. This is Extracellular matrix protein-binding protein emp (emp) from Staphylococcus aureus (strain Mu50 / ATCC 700699).